We begin with the raw amino-acid sequence, 387 residues long: Cell surface GPI-anchored protein ARB_01627 (387 aa).

The N-terminal stretch at 1–19 (MAITKYLVSALAVAGLAFA) is a signal peptide. Asn-73, Asn-175, Asn-201, Asn-206, Asn-231, Asn-236, Asn-253, and Asn-270 each carry an N-linked (GlcNAc...) asparagine glycan. Residues 338 to 361 (TCRERQEKPKTGDDHSGGDEEGHK) show a composition bias toward basic and acidic residues. A disordered region spans residues 338–362 (TCRERQEKPKTGDDHSGGDEEGHKG). Ala-364 carries GPI-anchor amidated alanine lipidation. A propeptide spans 365-387 (AAFAKAPAAALLIAFVGALQFFL) (removed in mature form).

It belongs to the SPS2 family. In terms of processing, the GPI-anchor is attached to the protein in the endoplasmic reticulum and serves to target the protein to the cell surface. There, the glucosamine-inositol phospholipid moiety is cleaved off and the GPI-modified mannoprotein is covalently attached via its lipidless GPI glycan remnant to the 1,6-beta-glucan of the outer cell wall layer.

The protein localises to the cell membrane. It is found in the secreted. It localises to the cell wall. Its function is as follows. Required for proper cell wall integrity and for the correct assembly of the mannoprotein outer layer of the cell wall. The protein is Cell surface GPI-anchored protein ARB_01627 of Arthroderma benhamiae (strain ATCC MYA-4681 / CBS 112371) (Trichophyton mentagrophytes).